The chain runs to 410 residues: Succinyl-CoA:(R)-benzylsuccinate CoA-transferase subunit BbsE (410 aa).

Belongs to the CoA-transferase III family. Heterotetramer composed of 2 BbsE subunits and 2 BbsF subunits.

The catalysed reaction is (R)-2-benzylsuccinate + succinyl-CoA = (R)-2-benzylsuccinyl-CoA + succinate. It participates in xenobiotic degradation; toluene degradation. Its activity is regulated as follows. Inhibited by (S)-benzylsuccinyl-CoA. Its function is as follows. Catalyzes the reversible conversion of (R)-2-benzylsuccinate to (R)-2-benzylsuccinyl-CoA. Inactive with (S)-benzylsuccinate. The protein is Succinyl-CoA:(R)-benzylsuccinate CoA-transferase subunit BbsE (bbsE) of Thauera aromatica.